The chain runs to 28 residues: Omega-conotoxin-like CnVIIH (28 aa).

Intrachain disulfides connect Cys1–Cys16, Cys8–Cys20, and Cys15–Cys27. Residue Pro7 is modified to 4-hydroxyproline; partial. Met12 is subject to Methionine sulfoxide. Cys27 bears the Cysteine amide mark.

It belongs to the conotoxin O1 superfamily. In terms of tissue distribution, expressed by the venom duct.

The protein localises to the secreted. In terms of biological role, omega-conotoxins act at presynaptic membranes, they bind and block voltage-gated calcium channels (Cav). This toxin blocks N-type calcium channels (Cav2.2/CACNA1B) with high potency. Unexpectedly, it does not show any blocking activity at amphibian neuromuscular junction. In vivo, when intracerebroventricularly injected into mice causes shaking activity, and, at higher doses, causes mild tremors. When injected intramuscularly into fish, it causes paralysis, and, at higher doses, causes death. The protein is Omega-conotoxin-like CnVIIH of Conus consors (Singed cone).